The sequence spans 506 residues: Maturase K (506 aa).

Belongs to the intron maturase 2 family. MatK subfamily.

The protein localises to the plastid. It localises to the chloroplast. Usually encoded in the trnK tRNA gene intron. Probably assists in splicing its own and other chloroplast group II introns. In Hydrangea macrophylla (Bigleaf hydrangea), this protein is Maturase K.